We begin with the raw amino-acid sequence, 679 residues long: Glycine--tRNA ligase beta subunit (679 aa).

This sequence belongs to the class-II aminoacyl-tRNA synthetase family. In terms of assembly, tetramer of two alpha and two beta subunits.

It localises to the cytoplasm. It carries out the reaction tRNA(Gly) + glycine + ATP = glycyl-tRNA(Gly) + AMP + diphosphate. This Streptococcus pyogenes serotype M49 (strain NZ131) protein is Glycine--tRNA ligase beta subunit.